The primary structure comprises 162 residues: MRNITSFFKTFLLWELLKGMKVTGKHFFTRKVTVQYPDEKTPISNRFRGLHALRRYENGEERCIACKLCEVVCPALAITINSTEREDGSRRTSSYEIDLFKCIFCGYCEESCPVDSIVETNILEYHFEERGENIMTKAKLLAIGDKYEAQIAADRLQDKDFR.

2 4Fe-4S ferredoxin-type domains span residues 54-83 (RRYE…INST) and 93-122 (SSYE…ETNI). Positions 63, 66, 69, 73, 102, 105, 108, and 112 each coordinate [4Fe-4S] cluster.

Belongs to the complex I 23 kDa subunit family. As to quaternary structure, NDH-1 is composed of 14 different subunits. Subunits NuoA, H, J, K, L, M, N constitute the membrane sector of the complex. Requires [4Fe-4S] cluster as cofactor.

The protein localises to the cell inner membrane. It catalyses the reaction a quinone + NADH + 5 H(+)(in) = a quinol + NAD(+) + 4 H(+)(out). Its function is as follows. NDH-1 shuttles electrons from NADH, via FMN and iron-sulfur (Fe-S) centers, to quinones in the respiratory chain. The immediate electron acceptor for the enzyme in this species is believed to be ubiquinone. Couples the redox reaction to proton translocation (for every two electrons transferred, four hydrogen ions are translocated across the cytoplasmic membrane), and thus conserves the redox energy in a proton gradient. In Francisella philomiragia subsp. philomiragia (strain ATCC 25017 / CCUG 19701 / FSC 153 / O#319-036), this protein is NADH-quinone oxidoreductase subunit I.